A 52-amino-acid polypeptide reads, in one-letter code: MARFPEAEARIFRKYICMRCGATNPWKAKKCRKCGYKGLRPKAREPRGGMGR.

This sequence belongs to the eukaryotic ribosomal protein eL40 family.

In Thermococcus onnurineus (strain NA1), this protein is Large ribosomal subunit protein eL40.